A 249-amino-acid polypeptide reads, in one-letter code: Exosome complex component Rrp41 (249 aa).

It belongs to the RNase PH family. Rrp41 subfamily. Component of the archaeal exosome complex. Forms a hexameric ring-like arrangement composed of 3 Rrp41-Rrp42 heterodimers. The hexameric ring associates with a trimer of Rrp4 and/or Csl4 subunits.

It localises to the cytoplasm. Its function is as follows. Catalytic component of the exosome, which is a complex involved in RNA degradation. Has 3'-&gt;5' exoribonuclease activity. Can also synthesize heteromeric RNA-tails. The polypeptide is Exosome complex component Rrp41 (Pyrococcus horikoshii (strain ATCC 700860 / DSM 12428 / JCM 9974 / NBRC 100139 / OT-3)).